A 142-amino-acid polypeptide reads, in one-letter code: Hemoglobin subunit alpha-A (142 aa).

Residues 2-142 form the Globin domain; it reads VLSANDKTNV…VGNVLTAKYR (141 aa). His59 contacts O2. His88 provides a ligand contact to heme b.

The protein belongs to the globin family. In terms of assembly, heterotetramer of two alpha chains and two beta chains. In terms of tissue distribution, red blood cells.

Its function is as follows. Involved in oxygen transport from the lung to the various peripheral tissues. This chain is Hemoglobin subunit alpha-A (HBAA), found in Aquila chrysaetos (Golden eagle).